The chain runs to 91 residues: Small ribosomal subunit protein uS19 (91 aa).

This sequence belongs to the universal ribosomal protein uS19 family.

Protein S19 forms a complex with S13 that binds strongly to the 16S ribosomal RNA. The polypeptide is Small ribosomal subunit protein uS19 (Neorickettsia sennetsu (strain ATCC VR-367 / Miyayama) (Ehrlichia sennetsu)).